The following is a 198-amino-acid chain: Transcriptional regulator GfcR (198 aa).

This sequence belongs to the purine/pyrimidine phosphoribosyltransferase family. GfcR subfamily.

The polypeptide is Transcriptional regulator GfcR (Methanosphaera stadtmanae (strain ATCC 43021 / DSM 3091 / JCM 11832 / MCB-3)).